A 750-amino-acid polypeptide reads, in one-letter code: E3 ubiquitin-protein ligase rfwd3.S (750 aa).

Residues 92–206 (RQAAEQRSSV…GAAPPAEPAP (115 aa)) form a disordered region. Residues 105 to 116 (RVQRRSTRRHQR) show a composition bias toward basic residues. Residues 122-144 (TAGTSSRAALSNFFQINRTQGVA) show a composition bias toward polar residues. A compositionally biased stretch (acidic residues) spans 168–181 (SSDETVELSEEEEG). The RING-type; degenerate zinc finger occupies 263–307 (CAICFEPWTNAGQHRLSALRCGHLFGFTCIERWLKGGAAKCPQCN). Positions 387 to 405 (TSMQASSSRSTISGSLSSS) are enriched in low complexity. The disordered stretch occupies residues 387–406 (TSMQASSSRSTISGSLSSSQ). WD repeat units follow at residues 470-510 (IHSK…VVQT), 512-552 (NTGR…NCVQ), and 558-603 (GSRC…YRPH).

It depends on [4Fe-4S] cluster as a cofactor.

The protein resides in the nucleus. It is found in the PML body. It localises to the cytoplasm. The catalysed reaction is S-ubiquitinyl-[E2 ubiquitin-conjugating enzyme]-L-cysteine + [acceptor protein]-L-lysine = [E2 ubiquitin-conjugating enzyme]-L-cysteine + N(6)-ubiquitinyl-[acceptor protein]-L-lysine.. Its pathway is protein modification; protein ubiquitination. Functionally, E3 ubiquitin-protein ligase required for the repair of DNA interstrand cross-links (ICL) in response to DNA damage. Plays a key role in RPA-mediated DNA damage signaling and repair. Required to translesion DNA synthesis across DNA-protein cross-link adducts by catalyzing ubiquitination of proteins on single-stranded DNA (ssDNA). Mediates ubiquitination of the hmces DNA-protein cross-link, possibly promoting its degradation. The sequence is that of E3 ubiquitin-protein ligase rfwd3.S (rfwd3.S) from Xenopus laevis (African clawed frog).